Consider the following 1194-residue polypeptide: Rho-associated protein kinase let-502 (1194 aa).

A Protein kinase domain is found at 68–330 (FRQLKVIGRG…VDEIRNHKFF (263 aa)). ATP contacts are provided by residues 74 to 82 (IGRGAFGEV) and Lys97. Asp190 acts as the Proton acceptor in catalysis. The region spanning 331–402 (KNDEWTFETL…SNEYSPVKKL (72 aa)) is the AGC-kinase C-terminal domain. Coiled-coil stretches lie at residues 436 to 844 (EEQY…MAKR) and 875 to 933 (GRIL…EYPQ). A RhoBD domain is found at 784–846 (EQNLKHIENQ…LEEEMAKRQP (63 aa)). Positions 961 to 1171 (IQIDGWLSLR…SQLRRFIEAS (211 aa)) constitute a PH domain. Residues 1085–1138 (RHDFQELSYHTRTYCDDCGKKLSDFIRPTPAFECKNCHYKTHKEHIAQGTITMC) form a Phorbol-ester/DAG-type zinc finger.

Belongs to the protein kinase superfamily. AGC Ser/Thr protein kinase family. In terms of assembly, interacts with rho-1. Requires Mg(2+) as cofactor.

It is found in the cytoplasm. The protein localises to the cytoskeleton. Its subcellular location is the cleavage furrow. The enzyme catalyses L-seryl-[protein] + ATP = O-phospho-L-seryl-[protein] + ADP + H(+). It catalyses the reaction L-threonyl-[protein] + ATP = O-phospho-L-threonyl-[protein] + ADP + H(+). Activated by rho-1 binding. Negatively regulates mel-11 to relieve the inhibition of mlc-4, allowing contraction of the circumferentially oriented microfilaments in epidermal cells and thereby regulating myosin II contractility during spermathecal contraction, cleavage furrow contraction in early embryos, and embryonic elongation and morphogenesis. Required for P-cell migration. May also play a role in oocyte cellularization. This is Rho-associated protein kinase let-502 from Caenorhabditis briggsae.